The sequence spans 206 residues: Urease accessory protein UreG (206 aa).

A GTP-binding site is contributed by 13 to 20; it reads GPVGSGKT.

The protein belongs to the SIMIBI class G3E GTPase family. UreG subfamily. In terms of assembly, homodimer. UreD, UreF and UreG form a complex that acts as a GTP-hydrolysis-dependent molecular chaperone, activating the urease apoprotein by helping to assemble the nickel containing metallocenter of UreC. The UreE protein probably delivers the nickel.

It localises to the cytoplasm. Facilitates the functional incorporation of the urease nickel metallocenter. This process requires GTP hydrolysis, probably effectuated by UreG. This chain is Urease accessory protein UreG, found in Natronomonas pharaonis (strain ATCC 35678 / DSM 2160 / CIP 103997 / JCM 8858 / NBRC 14720 / NCIMB 2260 / Gabara) (Halobacterium pharaonis).